We begin with the raw amino-acid sequence, 487 residues long: Cysteine--tRNA ligase (487 aa).

Residue cysteine 29 coordinates Zn(2+). The short motif at 31–41 is the 'HIGH' region element; the sequence is VTVYDVNHVGH. Zn(2+) contacts are provided by cysteine 209, histidine 234, and glutamate 238. The short motif at 266–270 is the 'KMSKS' region element; that stretch reads KMSKS. Lysine 269 provides a ligand contact to ATP.

Belongs to the class-I aminoacyl-tRNA synthetase family. As to quaternary structure, monomer. The cofactor is Zn(2+).

It is found in the cytoplasm. The catalysed reaction is tRNA(Cys) + L-cysteine + ATP = L-cysteinyl-tRNA(Cys) + AMP + diphosphate. In Persephonella marina (strain DSM 14350 / EX-H1), this protein is Cysteine--tRNA ligase.